A 132-amino-acid chain; its full sequence is Protein NrdI (132 aa).

Belongs to the NrdI family.

Functionally, probably involved in ribonucleotide reductase function. The sequence is that of Protein NrdI from Bartonella quintana (strain Toulouse) (Rochalimaea quintana).